A 79-amino-acid chain; its full sequence is Putative membrane protein insertion efficiency factor (79 aa).

This sequence belongs to the UPF0161 family.

It localises to the cell inner membrane. Functionally, could be involved in insertion of integral membrane proteins into the membrane. This chain is Putative membrane protein insertion efficiency factor, found in Synechocystis sp. (strain ATCC 27184 / PCC 6803 / Kazusa).